The primary structure comprises 356 residues: Peptide chain release factor 1 (356 aa).

Q232 carries the post-translational modification N5-methylglutamine.

Belongs to the prokaryotic/mitochondrial release factor family. Methylated by PrmC. Methylation increases the termination efficiency of RF1.

Its subcellular location is the cytoplasm. In terms of biological role, peptide chain release factor 1 directs the termination of translation in response to the peptide chain termination codons UAG and UAA. In Thermoanaerobacter pseudethanolicus (strain ATCC 33223 / 39E) (Clostridium thermohydrosulfuricum), this protein is Peptide chain release factor 1.